The sequence spans 282 residues: Acetyl-coenzyme A carboxylase carboxyl transferase subunit beta (282 aa).

The CoA carboxyltransferase N-terminal domain maps to 29–282; it reads LWRTCPKCQR…LMKYGGKQND (254 aa). Positions 33, 36, 51, and 54 each coordinate Zn(2+). The C4-type zinc-finger motif lies at 33 to 54; that stretch reads CPKCQRTLFAAQMDEYATCPGC.

The protein belongs to the AccD/PCCB family. In terms of assembly, acetyl-CoA carboxylase is a heterohexamer composed of biotin carboxyl carrier protein (AccB), biotin carboxylase (AccC) and two subunits each of ACCase subunit alpha (AccA) and ACCase subunit beta (AccD). The cofactor is Zn(2+).

The protein localises to the cytoplasm. The catalysed reaction is N(6)-carboxybiotinyl-L-lysyl-[protein] + acetyl-CoA = N(6)-biotinyl-L-lysyl-[protein] + malonyl-CoA. The protein operates within lipid metabolism; malonyl-CoA biosynthesis; malonyl-CoA from acetyl-CoA: step 1/1. Functionally, component of the acetyl coenzyme A carboxylase (ACC) complex. Biotin carboxylase (BC) catalyzes the carboxylation of biotin on its carrier protein (BCCP) and then the CO(2) group is transferred by the transcarboxylase to acetyl-CoA to form malonyl-CoA. The sequence is that of Acetyl-coenzyme A carboxylase carboxyl transferase subunit beta from Limosilactobacillus fermentum (strain NBRC 3956 / LMG 18251) (Lactobacillus fermentum).